Reading from the N-terminus, the 415-residue chain is Mannosylglycerate hydrolase (415 aa).

Substrate contacts are provided by residues tyrosine 23, 27–30 (WLWD), tyrosine 76, glutamine 98, and glycine 158. Residue aspartate 160 is the Proton donor of the active site. Substrate is bound by residues arginine 193 and 344 to 345 (YW). The Proton acceptor role is filled by glutamate 388.

Belongs to the glycosyl hydrolase 63 family. In terms of assembly, homotetramer in solution.

It catalyses the reaction (2R)-2-O-(alpha-D-mannosyl)-glycerate + H2O = D-mannose + (R)-glycerate. The catalysed reaction is (2R)-2-O-(alpha-D-glucopyranosyl)-glycerate + H2O = (R)-glycerate + D-glucose. Activity is not stimulated by divalent cations and not affected in the presence of EDTA. In terms of biological role, hydrolase that catalyzes the hydrolysis of mannosylglycerate (MG), a solute produced in response to osmotic stress in thermophiles, into mannose and glycerate. Can also hydrolyze glucosylglycerate (GG) to glucose and glycerate, with similar catalytic efficiency. Is highly specific for MG and GG, and cannot use mannosylglyceramide (MGA), glucosylglycerol, mannosylglucosylglycerate (MGG), glucosylglucosylglycerate (GGG) or trehalose as substrates. In Thermus thermophilus (strain ATCC BAA-163 / DSM 7039 / HB27), this protein is Mannosylglycerate hydrolase.